Here is a 368-residue protein sequence, read N- to C-terminus: E3 ubiquitin-protein ligase makorin (368 aa).

2 C3H1-type zinc fingers span residues 2-29 (STKR…HDWN) and 30-57 (DQPN…HVKV). The segment at 58-81 (SRNPTVAPPPSSSTTTRASSSLQP) is disordered. The segment covering 69–78 (SSTTTRASSS) has biased composition (low complexity). Residues 147-174 (PADLPICSFAAGGNCPYGEECPQMHGDL) form a C3H1-type 3 zinc finger. The interval 175–202 (CTTCGKMCLHPYRPDEREEHTKLCEKNH) is makorin-type Cys-His. Residues 216–274 (CSVCLDRVLSKPTAAERKFGLLSECDHPFCISCIRNWRNNSPTSGMDVNSALRACPICR) form an RING-type zinc finger. The C3H1-type 4 zinc finger occupies 303 to 332 (KLKSIDCKYFDFGTGTCPFGSSCFYKHAYR).

As to expression, expressed in primary roots and leaves. Detected in vascular bundle tissues.

The enzyme catalyses S-ubiquitinyl-[E2 ubiquitin-conjugating enzyme]-L-cysteine + [acceptor protein]-L-lysine = [E2 ubiquitin-conjugating enzyme]-L-cysteine + N(6)-ubiquitinyl-[acceptor protein]-L-lysine.. The protein operates within protein modification; protein ubiquitination. Functionally, E3 ubiquitin ligase catalyzing the covalent attachment of ubiquitin moieties onto substrate proteins. The sequence is that of E3 ubiquitin-protein ligase makorin (MKRN) from Oryza sativa subsp. japonica (Rice).